Consider the following 123-residue polypeptide: Transmembrane protein 254 (123 aa).

At alanine 2 the chain carries N-acetylalanine. A run of 3 helical transmembrane segments spans residues 15 to 35, 61 to 81, and 95 to 115; these read LFWFTVITLSFGYYTWVVFWP, LCNGYWLAWLIHVGESLYAIV, and LLWFLQTFFFGIASLTILIAY.

The protein localises to the membrane. The sequence is that of Transmembrane protein 254 (TMEM254) from Pongo abelii (Sumatran orangutan).